The primary structure comprises 498 residues: Mitogen-activated protein kinase 15 (498 aa).

Positions 13 to 304 (YKIEEVIGKG…AEEALADPYF (292 aa)) constitute a Protein kinase domain. ATP-binding positions include 19–27 (IGKGSYGVV) and lysine 42. Residue aspartate 139 is the Proton acceptor of the active site. At threonine 175 the chain carries Phosphothreonine. A TXY motif is present at residues 175-177 (TDY). Tyrosine 177 bears the Phosphotyrosine mark. Disordered stretches follow at residues 388-411 (STAAPPERQHNSLPRPSVLYSDDR) and 470-498 (STAEQYEHRRTDRNPALATNTVSPRGSYP). A compositionally biased stretch (polar residues) spans 486-498 (LATNTVSPRGSYP).

It belongs to the protein kinase superfamily. CMGC Ser/Thr protein kinase family. MAP kinase subfamily. In terms of processing, dually phosphorylated on Thr-175 and Tyr-177, which activates the enzyme.

The catalysed reaction is L-seryl-[protein] + ATP = O-phospho-L-seryl-[protein] + ADP + H(+). The enzyme catalyses L-threonyl-[protein] + ATP = O-phospho-L-threonyl-[protein] + ADP + H(+). With respect to regulation, activated by threonine and tyrosine phosphorylation. This chain is Mitogen-activated protein kinase 15 (MPK15), found in Oryza sativa subsp. japonica (Rice).